A 357-amino-acid polypeptide reads, in one-letter code: DNA replication and repair protein RecF (357 aa).

30–37 (GANGSGKT) provides a ligand contact to ATP.

The protein belongs to the RecF family.

It localises to the cytoplasm. The RecF protein is involved in DNA metabolism; it is required for DNA replication and normal SOS inducibility. RecF binds preferentially to single-stranded, linear DNA. It also seems to bind ATP. This is DNA replication and repair protein RecF from Escherichia coli O7:K1 (strain IAI39 / ExPEC).